The sequence spans 365 residues: Phosphatidylcholine:ceramide cholinephosphotransferase 2 (365 aa).

A disordered region spans residues 9–50 (LEGHLESQTNDSTNTYTSPTEAVEEEGKNGKGKPKTLSNGLR). The segment covering 14 to 28 (ESQTNDSTNTYTSPT) has biased composition (polar residues). The next 5 helical transmembrane spans lie at 80–100 (GIAFVYALFNLILTTVMITVV), 128–148 (FSVSEINGMVLVGLWITQWLF), 159–179 (FFFIMGTLYLYRCITMYVTTL), 219–239 (ILCGDFLFSGHTVVLTLTYLF), and 248–268 (FWWYHLVCWLLSAAGIICILV). His-229 is an active-site residue. Active-site residues include His-272 and Asp-276. A helical transmembrane segment spans residues 273–290 (YTVDVIIAYYITTRLFWW). Residues 291 to 365 (YHSMANEKNL…KIGEDNEKST (75 aa)) are Cytoplasmic-facing. Residues Cys-331, Cys-332, Cys-343, and Cys-348 are each lipidated (S-palmitoyl cysteine).

It belongs to the sphingomyelin synthase family. Palmitoylated on Cys-331, Cys-332, Cys-343 and Cys-348; which plays an important role in plasma membrane localization. In terms of tissue distribution, highest expression is detected in cortical bone, followed by vertebrae, kidney and liver. Expression levels are very low in spleen, muscle, heart, brown fat and thymus. Expressed in macrophages.

Its subcellular location is the cell membrane. The protein resides in the golgi apparatus membrane. The enzyme catalyses an N-acylsphing-4-enine + a 1,2-diacyl-sn-glycero-3-phosphocholine = a sphingomyelin + a 1,2-diacyl-sn-glycerol. It catalyses the reaction an N-acylsphinganine + a 1,2-diacyl-sn-glycero-3-phosphocholine = an N-acylsphinganine-1-phosphocholine + a 1,2-diacyl-sn-glycerol. It carries out the reaction an N-acyl-(4R)-4-hydroxysphinganine + a 1,2-diacyl-sn-glycero-3-phosphocholine = an N-acyl-(4R)-4-hydroxysphinganine-phosphocholine + a 1,2-diacyl-sn-glycerol. The catalysed reaction is an N-acylsphing-4-enine + a 1,2-diacyl-sn-glycero-3-phosphoethanolamine = an N-acylsphing-4-enine 1-phosphoethanolamine + a 1,2-diacyl-sn-glycerol. The enzyme catalyses an N-acylsphinganine + a 1,2-diacyl-sn-glycero-3-phosphoethanolamine = an N-acylsphinganine-1-phosphoethanolamine + a 1,2-diacyl-sn-glycerol. It catalyses the reaction an N-acyl-(4R)-4-hydroxysphinganine + a 1,2-diacyl-sn-glycero-3-phosphoethanolamine = an N-acyl-(4R)-4-hydroxysphinganine-1-phosphoethanolamine + a 1,2-diacyl-sn-glycerol. It carries out the reaction 1,2-dihexadecanoyl-sn-glycero-3-phosphocholine + an N-acylsphing-4-enine = 1,2-dihexadecanoyl-sn-glycerol + a sphingomyelin. The catalysed reaction is 1-(9Z-octadecenoyl)-2-acyl-sn-3-glycerol + a sphingomyelin = a 1-(9Z-octadecenoyl)-2-acyl-sn-glycero-3-phosphocholine + an N-acylsphing-4-enine. The enzyme catalyses N-hexadecanoylsphinganine + a 1,2-diacyl-sn-glycero-3-phosphocholine = N-hexadecanoyl-sphinganine-1-phosphocholine + a 1,2-diacyl-sn-glycerol. It catalyses the reaction N-hexadecanoyl-(4R)-hydroxysphinganine + a 1,2-diacyl-sn-glycero-3-phosphocholine = N-hexadecanoyl-(4R)-hydroxysphinganine-phosphocholine + a 1,2-diacyl-sn-glycerol. It carries out the reaction N-hexadecanoylsphinganine + a 1,2-diacyl-sn-glycero-3-phosphoethanolamine = N-hexadecanoyl-sphinganine-1-phosphoethanolamine + a 1,2-diacyl-sn-glycerol. The catalysed reaction is N-hexadecanoyl-(4R)-hydroxysphinganine + a 1,2-diacyl-sn-glycero-3-phosphoethanolamine = N-hexadecanoyl-(4R)-hydroxysphinganine-1-phosphoethanolamine + a 1,2-diacyl-sn-glycerol. It functions in the pathway sphingolipid metabolism. Sphingomyelin synthase that primarily contributes to sphingomyelin synthesis and homeostasis at the plasma membrane. Catalyzes the reversible transfer of phosphocholine moiety in sphingomyelin biosynthesis: in the forward reaction transfers phosphocholine head group of phosphatidylcholine (PC) on to ceramide (CER) to form ceramide phosphocholine (sphingomyelin, SM) and diacylglycerol (DAG) as by-product, and in the reverse reaction transfers phosphocholine from SM to DAG to form PC and CER. The direction of the reaction appears to depend on the levels of CER and DAG in the plasma membrane. Does not use free phosphorylcholine or CDP-choline as donors. Can also transfer phosphoethanolamine head group of phosphatidylethanolamine (PE) on to ceramide (CER) to form ceramide phosphoethanolamine (CPE). Regulates receptor-mediated signal transduction via mitogenic DAG and proapoptotic CER, as well as via SM, a structural component of membrane rafts that serve as platforms for signal transduction and protein sorting. To a lesser extent, plays a role in secretory transport via regulation of DAG pool at the Golgi apparatus and its downstream effects on PRKD1. Required for normal bone matrix mineralization. This chain is Phosphatidylcholine:ceramide cholinephosphotransferase 2 (Sgms2), found in Mus musculus (Mouse).